The chain runs to 322 residues: Protein mono-ADP-ribosyltransferase PARP16 (322 aa).

At 1–287 (MQPSGWAAAR…RASSQLSWFS (287 aa)) the chain is on the cytoplasmic side. The PARP alpha-helical domain occupies 5-91 (GWAAAREAAG…AWDLVSWILS (87 aa)). Position 37 is an ADP-ribosyl aspartic acid (Asp37). Position 70 is an ADP-ribosyl glutamic acid (Glu70). One can recognise a PARP catalytic domain in the interval 94–279 (VLTIHSAGKA…VYSQKPPKRA (186 aa)). 2 positions are modified to N6-(ADP-ribosyl)lysine: Lys110 and Lys137. Residues His152, Tyr182, and Tyr254 each contribute to the NAD(+) site. A helical transmembrane segment spans residues 288-308 (SHWFTVMISLYLLLLLIVSVI). At 309–322 (NSSAFQHFWNRAKR) the chain is on the lumenal side.

It belongs to the ARTD/PARP family. In terms of assembly, interacts with KPNB1. In terms of processing, auto-mono-ADP-ribosylated.

It is found in the endoplasmic reticulum membrane. It carries out the reaction L-aspartyl-[protein] + NAD(+) = 4-O-(ADP-D-ribosyl)-L-aspartyl-[protein] + nicotinamide. It catalyses the reaction L-glutamyl-[protein] + NAD(+) = 5-O-(ADP-D-ribosyl)-L-glutamyl-[protein] + nicotinamide. The enzyme catalyses L-lysyl-[protein] + NAD(+) = N(6)-(ADP-D-ribosyl)-L-lysyl-[protein] + nicotinamide + H(+). With respect to regulation, in absence of activation signal, PARP16 is autoinhibited by the PARP alpha-helical domain (also named HD region), which prevents effective NAD(+)-binding. Activity is highly stimulated by signals, which unfold the PARP alpha-helical domain, relieving autoinhibition. Its function is as follows. Intracellular mono-ADP-ribosyltransferase that plays a role in different processes, such as protein translation and unfolded protein response (UPR), through the mono-ADP-ribosylation of proteins involved in those processes. Acts as an inhibitor of protein translation by catalyzing mono-ADP-ribosylation of ribosomal subunits, such as RPL14 and RPS6, thereby inhibiting polysome assembly and mRNA loading. Mono-ADP-ribosylation of ribosomal subunits is promoted by NMNAT2. Involved in the unfolded protein response (UPR) by ADP-ribosylating and activating EIF2AK3 and ERN1, two important UPR effectors. May also mediate mono-ADP-ribosylation of karyopherin KPNB1 a nuclear import factor. May not modify proteins on arginine or cysteine residues compared to other mono-ADP-ribosyltransferases. In Homo sapiens (Human), this protein is Protein mono-ADP-ribosyltransferase PARP16.